A 119-amino-acid chain; its full sequence is Large ribosomal subunit protein bL20 (119 aa).

It belongs to the bacterial ribosomal protein bL20 family.

In terms of biological role, binds directly to 23S ribosomal RNA and is necessary for the in vitro assembly process of the 50S ribosomal subunit. It is not involved in the protein synthesizing functions of that subunit. This Streptococcus uberis (strain ATCC BAA-854 / 0140J) protein is Large ribosomal subunit protein bL20.